We begin with the raw amino-acid sequence, 290 residues long: MALLLELAHGLPWLYFSLVFLFSLMIGSFLNVVIHRLPIMLEREWQAEYRSYFNPDDEGVDEPPYNLMVPRSCCPHCNHPITALENIPLLSWLWLRGRCRGCQAPISARYPLVELLTALLSVAVAMTLAPGWGTLAALLLTWVLVALTFIDLDKMLLPDQLTLPLLWGGLLFNLLGGFVSLGDAVIGAMAGYLVLWSLYWAFKLLTGKEGMGYGDFKLLAALGAWLGWQALPIVLLLSSLVGAFMGIGLILLRNHHQSKPIPFGPYLAIAGWIALLWGDSITRWYLTNFL.

A helical transmembrane segment spans residues 14-34 (LYFSLVFLFSLMIGSFLNVVI). 4 residues coordinate Zn(2+): cysteine 74, cysteine 77, cysteine 99, and cysteine 102. Transmembrane regions (helical) follow at residues 106 to 126 (ISAR…AVAM), 130 to 150 (PGWG…LTFI), 161 to 181 (LTLP…FVSL), 185 to 205 (VIGA…FKLL), 232 to 252 (PIVL…LILL), and 261 to 281 (IPFG…GDSI).

Belongs to the peptidase A24 family. Zn(2+) serves as cofactor.

It is found in the cell inner membrane. It catalyses the reaction Typically cleaves a -Gly-|-Phe- bond to release an N-terminal, basic peptide of 5-8 residues from type IV prepilin, and then N-methylates the new N-terminal amino group, the methyl donor being S-adenosyl-L-methionine.. Plays an essential role in type IV pili and type II pseudopili formation by proteolytically removing the leader sequence from substrate proteins and subsequently monomethylating the alpha-amino group of the newly exposed N-terminal phenylalanine. The protein is Prepilin leader peptidase/N-methyltransferase (tapD) of Aeromonas hydrophila.